We begin with the raw amino-acid sequence, 787 residues long: Protein PAT1 homolog 2 (787 aa).

Disordered stretches follow at residues 94 to 120 (KHLG…WTQD), 134 to 221 (EQVQ…NASP), 338 to 374 (VREH…GLQF), 411 to 445 (LAKK…QQPQ), and 765 to 787 (VSES…FVRG). Residues 105–120 (GSFSRESSTATDWTQD) are compositionally biased toward polar residues. Positions 142–153 (SSQPQSSPNSNS) are enriched in low complexity. Polar residues-rich tracts occupy residues 154 to 171 (LYRT…QHYS), 180 to 198 (STFT…SSPS), and 208 to 221 (GGSQ…NASP). Residues Ser184 and Ser192 each carry the phosphoserine modification. Basic residues predominate over residues 341 to 353 (HKHKSSHRSRKNR). Composition is skewed to polar residues over residues 355–373 (GISQ…SGLQ) and 436–445 (SRNSSDQQPQ).

Activator of mRNA decapping. Involved in mRNA decay via decapping. The polypeptide is Protein PAT1 homolog 2 (Arabidopsis thaliana (Mouse-ear cress)).